An 89-amino-acid polypeptide reads, in one-letter code: Small ribosomal subunit protein uS15 (89 aa).

The protein belongs to the universal ribosomal protein uS15 family. In terms of assembly, part of the 30S ribosomal subunit. Forms a bridge to the 50S subunit in the 70S ribosome, contacting the 23S rRNA.

Its function is as follows. One of the primary rRNA binding proteins, it binds directly to 16S rRNA where it helps nucleate assembly of the platform of the 30S subunit by binding and bridging several RNA helices of the 16S rRNA. Functionally, forms an intersubunit bridge (bridge B4) with the 23S rRNA of the 50S subunit in the ribosome. The chain is Small ribosomal subunit protein uS15 from Nitratidesulfovibrio vulgaris (strain DP4) (Desulfovibrio vulgaris).